A 291-amino-acid polypeptide reads, in one-letter code: Malolactic fermentation system transcriptional activator (291 aa).

Residues 1-60 (MSLNLRDLEYFYQLSKLRSFTNVAKHFRVSQPTISYAIKRLETYYDCDLFYKDSSHQVVD) form the HTH lysR-type domain. Residues 20–39 (FTNVAKHFRVSQPTISYAIK) constitute a DNA-binding region (H-T-H motif).

The protein belongs to the LysR transcriptional regulatory family.

It localises to the cytoplasm. Its function is as follows. Required for malolactic fermentation. It is most probably a transcriptional activator. This is Malolactic fermentation system transcriptional activator (mleR) from Lactococcus lactis subsp. lactis (strain IL1403) (Streptococcus lactis).